We begin with the raw amino-acid sequence, 575 residues long: MVAKLEQLIAQTILQGFDAQYGRFLEVTAGAQHRFEQADWHAVQQAMKKRIHLYDHHVGLVVEQLKYITDQRHFDVEFLARVKEIYTGLLPDYPRFEIAESFFNSVYCRLFKHRDLTPDKLFVFSSQPERRFREIPRPLARDFIPKGDLSGMLQMVLNDLSLRLPWENLSRDIDYIVMAIRQAFTDEQLASAHFQIANELFYRNKAAWLVGKLRLNGDIYPFLLPIHHNESGELFIDTCLTSKAEASIVFGFARSYFMVYVPLPAAMVEWLREILPGKSTAELYTAIGCQKHGKTESYREYLAFIHQSSEQFIIAPGVKGMVMLVFTLPSFDRVFKVIKDQFAPQKEVTQARVLECYQLVKEHDRVGRMADTQEYENFVIDKHRISPELLAELQHEVPEKLEDLGDKIVIKHLYMERRMTPLNLYMEQADDQQLKDAIEEYGNAIKQLAAANIFPGDMLFKNFGVTRHGRVVFYDYDEICYMTEVNFRDIPPPRYPEDEMASEPWYSVSPNDVFPEEFRHFLCSDRKVRHFFEEMHGDLFQASYWRGLQQRIRDGHVEDVFAYRRKQRFSQRALN.

Residues 315–321 (APGVKGM) and Lys-336 contribute to the ATP site. Residue Asp-371 is part of the active site.

Belongs to the AceK family.

It localises to the cytoplasm. The catalysed reaction is L-seryl-[isocitrate dehydrogenase] + ATP = O-phospho-L-seryl-[isocitrate dehydrogenase] + ADP + H(+). In terms of biological role, bifunctional enzyme which can phosphorylate or dephosphorylate isocitrate dehydrogenase (IDH) on a specific serine residue. This is a regulatory mechanism which enables bacteria to bypass the Krebs cycle via the glyoxylate shunt in response to the source of carbon. When bacteria are grown on glucose, IDH is fully active and unphosphorylated, but when grown on acetate or ethanol, the activity of IDH declines drastically concomitant with its phosphorylation. The polypeptide is Isocitrate dehydrogenase kinase/phosphatase (Yersinia pseudotuberculosis serotype I (strain IP32953)).